We begin with the raw amino-acid sequence, 31 residues long: Cyclotide vico-A (31 aa).

A cross-link (cyclopeptide (Gly-Asn)) is located at residues 1 to 31 (GSIPCAESCVYIPCFTGIAGCSCKNKVCYYN). 3 disulfide bridges follow: cysteine 5-cysteine 21, cysteine 9-cysteine 23, and cysteine 14-cysteine 28.

It belongs to the cyclotide family. Bracelet subfamily. Post-translationally, this is a cyclic peptide.

Its function is as follows. Probably participates in a plant defense mechanism. This Viola cotyledon (Violeta) protein is Cyclotide vico-A.